We begin with the raw amino-acid sequence, 605 residues long: Kelch-like protein 41b (605 aa).

The BTB domain occupies 32 to 102 (VDCTLKIGDR…YSAEIDLVDD (71 aa)). The BACK domain maps to 136–238 (CLAVFRLGLV…PEKYFREKVE (103 aa)). 5 Kelch repeats span residues 345–397 (QLFI…ESEN), 398–446 (LLFA…SHNN), 447–494 (LVYC…VHKG), 496–541 (IIVT…SSGG), and 543–598 (LFSI…MRLN).

It localises to the cytoplasm. It is found in the cytoskeleton. The protein localises to the sarcoplasmic reticulum membrane. Its subcellular location is the endoplasmic reticulum membrane. Involved in skeletal muscle development and maintenance. This is Kelch-like protein 41b from Danio rerio (Zebrafish).